A 159-amino-acid chain; its full sequence is Ribonuclease H (159 aa).

Residues 4-145 form the RNase H type-1 domain; that stretch reads THKQVNIYTD…CDKLARDAAE (142 aa). Mg(2+)-binding residues include D13, E51, D73, and D137.

It belongs to the RNase H family. As to quaternary structure, monomer. Mg(2+) serves as cofactor.

The protein resides in the cytoplasm. It catalyses the reaction Endonucleolytic cleavage to 5'-phosphomonoester.. Its function is as follows. Endonuclease that specifically degrades the RNA of RNA-DNA hybrids. The polypeptide is Ribonuclease H (Shewanella denitrificans (strain OS217 / ATCC BAA-1090 / DSM 15013)).